We begin with the raw amino-acid sequence, 146 residues long: Ribonuclease P protein component (146 aa).

This sequence belongs to the RnpA family. As to quaternary structure, consists of a catalytic RNA component (M1 or rnpB) and a protein subunit.

It catalyses the reaction Endonucleolytic cleavage of RNA, removing 5'-extranucleotides from tRNA precursor.. In terms of biological role, RNaseP catalyzes the removal of the 5'-leader sequence from pre-tRNA to produce the mature 5'-terminus. It can also cleave other RNA substrates such as 4.5S RNA. The protein component plays an auxiliary but essential role in vivo by binding to the 5'-leader sequence and broadening the substrate specificity of the ribozyme. This Helicobacter hepaticus (strain ATCC 51449 / 3B1) protein is Ribonuclease P protein component.